Consider the following 314-residue polypeptide: Probable carboxylesterase 2 (314 aa).

Residues 79 to 81 (HGG) carry the Involved in the stabilization of the negatively charged intermediate by the formation of the oxyanion hole motif. Residues Ser158, Asp254, and His286 contribute to the active site.

The protein belongs to the 'GDXG' lipolytic enzyme family. In terms of tissue distribution, expressed in roots and flowers.

It catalyses the reaction a carboxylic ester + H2O = an alcohol + a carboxylate + H(+). Functionally, carboxylesterase acting on esters with varying acyl chain length. This is Probable carboxylesterase 2 (CXE2) from Arabidopsis thaliana (Mouse-ear cress).